A 369-amino-acid polypeptide reads, in one-letter code: Virion membrane protein A16 homolog (369 aa).

A lipid anchor (N-myristoyl glycine; by host) is attached at G2. The Virion surface segment spans residues 2–330 (GQHVSNITVI…SYNKEAKLPS (329 aa)). A helical transmembrane segment spans residues 331-351 (FFSIIPVCIVLLCLFVLFYFL). Residues 352–369 (RIYDAKVINSNTINVYRK) lie on the Intravirion side of the membrane.

Belongs to the poxviridae A16/G9/J5 family. Part of a stable entry-fusion complex (EFC) which is at least composed of proteins A16, A21, A28, G3, G9, H2, J5, and L5. Formation of the viral membrane is necessary for the assembly of the complex. Interacts with G9. In terms of processing, most cysteines are linked by disulfide bonds. They are created by the viral disulfide bond formation pathway, a poxvirus-specific redox pathway that operates on the cytoplasmic side of the MV membranes.

The protein resides in the virion membrane. Its function is as follows. Envelope protein part of the entry-fusion complex responsible for the virus membrane fusion with host cell membrane during virus entry. Also plays a role in cell-cell fusion (syncytium formation). This is Virion membrane protein A16 homolog from Fowlpox virus (strain NVSL) (FPV).